Consider the following 710-residue polypeptide: Proline-rich receptor-like protein kinase PERK13 (710 aa).

Positions 1-229 are disordered; it reads MSDSPTSSPP…SVPPPANSGG (229 aa). The Extracellular portion of the chain corresponds to 1-235; sequence MSDSPTSSPP…NSGGGYQGKT (235 aa). Composition is skewed to pro residues over residues 7–21, 29–130, 137–151, and 168–188; these read SSPP…PPPD, APPP…PPPP, PPAP…PPAS, and ATSP…PNAP. Asn-191 is a glycosylation site (N-linked (GlcNAc...) asparagine). Over residues 209–220 the composition is skewed to low complexity; sequence SPSRGVPSSGNS. The chain crosses the membrane as a helical span at residues 236–256; the sequence is MAGFAIAGFAVIALMAVVFLV. At 257 to 710 the chain is on the cytoplasmic side; sequence RRKKKRNIDA…ENRNFNNRRY (454 aa). The segment at 289-334 is disordered; the sequence is QNPTKGYSGPGGYNSQQQSNSGNSFGSQRGGGGYTRSGSAPDSAVM. Low complexity predominate over residues 301 to 315; that stretch reads YNSQQQSNSGNSFGS. Position 342 is a phosphothreonine (Thr-342). The Protein kinase domain occupies 353–619; sequence FSKHNILGEG…RHSGPKRPRM (267 aa). Residues 359–367 and Lys-381 each bind ATP; that span reads LGEGGFGCV. Phosphotyrosine is present on Tyr-426. Asp-477 serves as the catalytic Proton acceptor. Residue Ser-510 is modified to Phosphoserine. Residues Thr-511 and Thr-516 each carry the phosphothreonine modification. A Phosphotyrosine modification is found at Tyr-524. A disordered region spans residues 676 to 710; the sequence is SGDYSVQDSRKGSNGASSEFTRNETENRNFNNRRY.

It belongs to the protein kinase superfamily. Ser/Thr protein kinase family. As to quaternary structure, interacts with KIPK1 and KIPK2 (via its cytosolic domain). In terms of tissue distribution, mostly expressed in roots, especially in root hairs.

It is found in the cell membrane. The catalysed reaction is L-seryl-[protein] + ATP = O-phospho-L-seryl-[protein] + ADP + H(+). It carries out the reaction L-threonyl-[protein] + ATP = O-phospho-L-threonyl-[protein] + ADP + H(+). In terms of biological role, negatively regulates root hair elongation. The protein is Proline-rich receptor-like protein kinase PERK13 (PERK13) of Arabidopsis thaliana (Mouse-ear cress).